The chain runs to 393 residues: NAD(P)H-quinone oxidoreductase subunit H, chloroplastic (393 aa).

It belongs to the complex I 49 kDa subunit family. NDH is composed of at least 16 different subunits, 5 of which are encoded in the nucleus.

The protein localises to the plastid. The protein resides in the chloroplast thylakoid membrane. The catalysed reaction is a plastoquinone + NADH + (n+1) H(+)(in) = a plastoquinol + NAD(+) + n H(+)(out). It carries out the reaction a plastoquinone + NADPH + (n+1) H(+)(in) = a plastoquinol + NADP(+) + n H(+)(out). NDH shuttles electrons from NAD(P)H:plastoquinone, via FMN and iron-sulfur (Fe-S) centers, to quinones in the photosynthetic chain and possibly in a chloroplast respiratory chain. The immediate electron acceptor for the enzyme in this species is believed to be plastoquinone. Couples the redox reaction to proton translocation, and thus conserves the redox energy in a proton gradient. The chain is NAD(P)H-quinone oxidoreductase subunit H, chloroplastic from Piper cenocladum (Ant piper).